Consider the following 31-residue polypeptide: Cyclotide mech-5 (31 aa).

The segment at residues 1–31 (GVIPCGESCVFIPCISSVVGCTCKNKVCYRD) is a cross-link (cyclopeptide (Gly-Asp)). Cystine bridges form between Cys5/Cys21, Cys9/Cys23, and Cys14/Cys28.

This is a cyclic peptide. In terms of processing, contains 3 disulfide bonds.

Its function is as follows. Probably participates in a plant defense mechanism (Potential). Binds to and induces leakage in phospholipd membranes, particularly ones containing 1-palmitoyl-2-oleophosphatidylethanolamine (POPE). This chain is Cyclotide mech-5, found in Melicytus chathamicus (Chatham Island mahoe).